Consider the following 356-residue polypeptide: Heparan sulfate 2-O-sulfotransferase 1 (356 aa).

The Cytoplasmic segment spans residues methionine 1–lysine 11. The chain crosses the membrane as a helical; Signal-anchor for type II membrane protein span at residues leucine 12–glutamate 28. The stretch at methionine 24–arginine 51 forms a coiled coil. Residues asparagine 29–asparagine 356 are Lumenal-facing. Lysine 83, threonine 84, alanine 85, serine 86, threonine 87, and serine 88 together coordinate adenosine 3',5'-bisphosphate. Asparagine 108 and asparagine 127 each carry an N-linked (GlcNAc...) asparagine glycan. Catalysis depends on residues histidine 140 and histidine 142. 2 residues coordinate adenosine 3',5'-bisphosphate: arginine 164 and serine 172. Intrachain disulfides connect cysteine 201–cysteine 209 and cysteine 222–cysteine 228. Adenosine 3',5'-bisphosphate-binding residues include tyrosine 279, serine 285, threonine 290, and lysine 293.

This sequence belongs to the sulfotransferase 3 family. In terms of assembly, homotrimer. Interacts with the C5-epimerase GLCE. In terms of processing, N-glycosylated. Widely expressed. Expressed at higher level in lung and brain. Weakly expressed in spleen.

It localises to the golgi apparatus membrane. Catalyzes the transfer of a sulfo group from 3'-phospho-5'-adenylyl sulfate (PAPS) to the 2-OH position of iduronic acid (IdoA) or glucuronic acid (GlcA) within the heparan sulfate (HS) chain and participates in HS biosynthesis. Required for metanephric development of kidney formation, suggesting that 2-O-sulfation within HS is essential for signaling between ureteric bud and metanephric mesenchyme. The protein is Heparan sulfate 2-O-sulfotransferase 1 of Mus musculus (Mouse).